The sequence spans 641 residues: Macrolide export ATP-binding/permease protein MacB (641 aa).

The ABC transporter domain maps to 2-236 (IFLKNICKNI…LILKTMPKEK (235 aa)). 34-41 (GQSGSGKT) is an ATP binding site. Transmembrane regions (helical) follow at residues 265 to 285 (ILTM…VALG), 519 to 539 (ACVA…IMLV), 571 to 591 (MICT…IFAF), and 604 to 624 (AYSV…FGFF).

This sequence belongs to the ABC transporter superfamily. Macrolide exporter (TC 3.A.1.122) family. Homodimer.

It localises to the cell inner membrane. Its function is as follows. Non-canonical ABC transporter that contains transmembrane domains (TMD), which form a pore in the inner membrane, and an ATP-binding domain (NBD), which is responsible for energy generation. Confers resistance against macrolides. The polypeptide is Macrolide export ATP-binding/permease protein MacB (Campylobacter jejuni subsp. jejuni serotype O:2 (strain ATCC 700819 / NCTC 11168)).